The primary structure comprises 517 residues: GMP synthase [glutamine-hydrolyzing] (517 aa).

The region spanning 4–193 (KIIILDFGSQ…VVDICGGKQD (190 aa)) is the Glutamine amidotransferase type-1 domain. The active-site Nucleophile is Cys79. Catalysis depends on residues His167 and Glu169. Positions 194-382 (WSAASFIETT…LGMPEHLITR (189 aa)) constitute a GMPS ATP-PPase domain. 221–227 (SGGVDSS) lines the ATP pocket.

As to quaternary structure, homodimer.

It catalyses the reaction XMP + L-glutamine + ATP + H2O = GMP + L-glutamate + AMP + diphosphate + 2 H(+). It functions in the pathway purine metabolism; GMP biosynthesis; GMP from XMP (L-Gln route): step 1/1. In terms of biological role, catalyzes the synthesis of GMP from XMP. The protein is GMP synthase [glutamine-hydrolyzing] of Phocaeicola vulgatus (strain ATCC 8482 / DSM 1447 / JCM 5826 / CCUG 4940 / NBRC 14291 / NCTC 11154) (Bacteroides vulgatus).